We begin with the raw amino-acid sequence, 389 residues long: MAGGRPQLKRSFSIIPCFVFVEILLGELARAFFPAPPSAVPIIGESTIVSGACCRFSPPLRRLVRFLGVYSFGLFTTTIFANAGQVVTGNPTPHFLSVCRPNYTALGCPPPSPDRPGPDRFVNDQGACAGSPSLVAAARRAFPCKDAALCAYAVTYTAMYVTLVFRVKGSRLVKPSLCLALLCPAFLVGVVRVAEYRNHWSDVLAGFLTGAAIATFLVTCVVHNFQSRPPSGRRLSPWEDLSQAPTMDSPLEKLSVAQEPEGCRSHSTPARLTPSKPQNCARRGHLIPNCVSSRAPAMCSSPRVPRPRLRSEPTPLPLPLPLPAPAPSQGPSPSSPGPGGPGGGGSRGRKLLLPTPLLRDLYTLSGLYPSPFHRDNFSPYLFASRDHLL.

2 helical membrane-spanning segments follow: residues I14–P34 and F66–V86. N102 carries N-linked (GlcNAc...) asparagine glycosylation. 3 helical membrane passes run A147–V167, S176–Y196, and V203–H223. S236 and S249 each carry phosphoserine. Disordered stretches follow at residues S255–C280 and A295–L351. The segment covering S265–Q278 has biased composition (polar residues). A compositionally biased stretch (pro residues) spans T314–G339.

This sequence belongs to the PA-phosphatase related phosphoesterase family.

It localises to the membrane. In Bos taurus (Bovine), this protein is Phospholipid phosphatase-related protein type 2.